The sequence spans 206 residues: Ras-related protein Rab-14 (206 aa).

Residue G15–S22 coordinates GTP. The Effector region signature appears at S37–F45. Residues D63–Q67 and N121–D124 each bind GTP. Positions P182 to C206 are disordered. Residues N189–C206 show a composition bias toward polar residues. Residues C204 and C206 are each lipidated (S-geranylgeranyl cysteine). C206 carries the post-translational modification Cysteine methyl ester.

The protein belongs to the small GTPase superfamily. Rab family.

The protein localises to the endosome. The protein resides in the contractile vacuole. It localises to the membrane. It carries out the reaction GTP + H2O = GDP + phosphate + H(+). With respect to regulation, rab activation is generally mediated by a guanine exchange factor (GEF), while inactivation through hydrolysis of bound GTP is catalyzed by a GTPase activating protein (GAP). That Rab is activated by the DENND6A and DENND6B guanine exchange factors (GEF). In terms of biological role, the small GTPases Rab are key regulators of intracellular membrane trafficking, from the formation of transport vesicles to their fusion with membranes. Rabs cycle between an inactive GDP-bound form and an active GTP-bound form that is able to recruit to membranes different set of downstream effectors directly responsible for vesicle formation, movement, tethering and fusion. Regulates the fusion of phagosomes and lysosomes. The polypeptide is Ras-related protein Rab-14 (rab14) (Dictyostelium discoideum (Social amoeba)).